Consider the following 174-residue polypeptide: MGKITFYEDRDFQGRCYNCISDCPNLRVYFSRCNSIRVDSGCWMLYERPNYQGHQYFLRRGKYPDYQHWMGLSDSVQSCRIIPHTSSHKLRLYERDDYRGLMSELTDDCACVPELFRLPEIYSLHVLEGCWVLYEMPNYRGRQYLLRPGDYRRYHDWGGADAKVGSLRRVTDLY.

Beta/gamma crystallin 'Greek key' domains are found at residues 2–40 (GKIT…RVDS) and 41–83 (GCWM…RIIP). The connecting peptide stretch occupies residues 84–87 (HTSS). Beta/gamma crystallin 'Greek key' domains follow at residues 88–128 (HKLR…HVLE) and 129–171 (GCWV…RRVT).

It belongs to the beta/gamma-crystallin family. Monomer.

Functionally, crystallins are the dominant structural components of the vertebrate eye lens. The sequence is that of Gamma-crystallin A (CRYGA) from Homo sapiens (Human).